The primary structure comprises 355 residues: Small ribosomal subunit biogenesis GTPase RsgA 1 (355 aa).

Positions 103 to 262 (GRVADRQAIA…LIDTPGVREF (160 aa)) constitute a CP-type G domain. Residues 152–155 (NKAD) and 204–212 (GSSGVGKSS) each bind GTP. Residues cysteine 285, cysteine 290, histidine 292, and cysteine 298 each contribute to the Zn(2+) site.

It belongs to the TRAFAC class YlqF/YawG GTPase family. RsgA subfamily. As to quaternary structure, monomer. Associates with 30S ribosomal subunit, binds 16S rRNA. Zn(2+) is required as a cofactor.

It localises to the cytoplasm. Its function is as follows. One of several proteins that assist in the late maturation steps of the functional core of the 30S ribosomal subunit. Helps release RbfA from mature subunits. May play a role in the assembly of ribosomal proteins into the subunit. Circularly permuted GTPase that catalyzes slow GTP hydrolysis, GTPase activity is stimulated by the 30S ribosomal subunit. In Bacteroides thetaiotaomicron (strain ATCC 29148 / DSM 2079 / JCM 5827 / CCUG 10774 / NCTC 10582 / VPI-5482 / E50), this protein is Small ribosomal subunit biogenesis GTPase RsgA 1.